The primary structure comprises 383 residues: Putative F-box protein At4g09190 (383 aa).

Residues 16–67 (RSQREHIPLDLIVEIVSSLPAKSIVRFRSVSKLWSSIITTPDFTSSVVTRSL) enclose the F-box domain.

The protein is Putative F-box protein At4g09190 of Arabidopsis thaliana (Mouse-ear cress).